We begin with the raw amino-acid sequence, 221 residues long: Octanoyltransferase (221 aa).

Residues 31–216 (GQIGDTLLLL…SLCAIFDLRP (186 aa)) enclose the BPL/LPL catalytic domain. Substrate-binding positions include 76 to 83 (RGGEVTYH), 145 to 147 (AIG), and 159 to 161 (GLA). Catalysis depends on cysteine 177, which acts as the Acyl-thioester intermediate.

The protein belongs to the LipB family.

Its subcellular location is the cytoplasm. The catalysed reaction is octanoyl-[ACP] + L-lysyl-[protein] = N(6)-octanoyl-L-lysyl-[protein] + holo-[ACP] + H(+). It functions in the pathway protein modification; protein lipoylation via endogenous pathway; protein N(6)-(lipoyl)lysine from octanoyl-[acyl-carrier-protein]: step 1/2. In terms of biological role, catalyzes the transfer of endogenously produced octanoic acid from octanoyl-acyl-carrier-protein onto the lipoyl domains of lipoate-dependent enzymes. Lipoyl-ACP can also act as a substrate although octanoyl-ACP is likely to be the physiological substrate. This is Octanoyltransferase from Chloroflexus aggregans (strain MD-66 / DSM 9485).